The chain runs to 373 residues: Flagellar P-ring protein (373 aa).

Residues 1–26 form the signal peptide; that stretch reads MKLFFRIVTLVAVVAMSLADMAPAWA.

Belongs to the FlgI family. As to quaternary structure, the basal body constitutes a major portion of the flagellar organelle and consists of four rings (L,P,S, and M) mounted on a central rod.

It is found in the periplasm. The protein localises to the bacterial flagellum basal body. In terms of biological role, assembles around the rod to form the L-ring and probably protects the motor/basal body from shearing forces during rotation. This is Flagellar P-ring protein from Rhizobium etli (strain ATCC 51251 / DSM 11541 / JCM 21823 / NBRC 15573 / CFN 42).